A 27-amino-acid polypeptide reads, in one-letter code: Phospholipase A2 P-elapitoxin-Aa1a alpha chain (27 aa).

The protein belongs to the phospholipase A2 family. Group I subfamily. Heterotrimer of alpha, beta and gamma chains, each related to PLA2. Ca(2+) is required as a cofactor. As to expression, expressed by the venom gland.

It localises to the secreted. The enzyme catalyses a 1,2-diacyl-sn-glycero-3-phosphocholine + H2O = a 1-acyl-sn-glycero-3-phosphocholine + a fatty acid + H(+). Functionally, heterotrimer: presynaptic neurotoxin. Inhibits nerve-evoked twitch contractions but not responses to cholinergic agonists acetylcholine and carbachol and to depolarizing agonist KCl. Causes a fade in tetanic contractions. Displays a triphasic mode of action with depression, enhancement and blockade of neurotransmission. Does not display myotoxic activity such as changes in baseline muscle tension or inhibition of directly stimulated muscle twitches. All subunits are necessary for maximum toxicity. In terms of biological role, monomer: Snake venom phospholipase A2 (PLA2) alpha chain that has enzymatic activity. PLA2 catalyzes the calcium-dependent hydrolysis of the 2-acyl groups in 3-sn-phosphoglycerides. The polypeptide is Phospholipase A2 P-elapitoxin-Aa1a alpha chain (Acanthophis antarcticus (Common death adder)).